The chain runs to 320 residues: L-lactate dehydrogenase (320 aa).

Residues Val18, Asp39, Arg44, Tyr69, and Gly83–Ala84 contribute to the NAD(+) site. Substrate is bound by residues Gln86 and Arg92. NAD(+) contacts are provided by residues Ser105, Ala122–Asn124, and Ser147. Asn124–Asp127 lines the substrate pocket. Asp152 to Arg155 serves as a coordination point for substrate. His179 (proton acceptor) is an active-site residue. Tyr223 is modified (phosphotyrosine). A substrate-binding site is contributed by Thr232.

The protein belongs to the LDH/MDH superfamily. LDH family. Homotetramer.

It localises to the cytoplasm. The catalysed reaction is (S)-lactate + NAD(+) = pyruvate + NADH + H(+). Its pathway is fermentation; pyruvate fermentation to lactate; (S)-lactate from pyruvate: step 1/1. The quaternary structure is constitutionally similar to the active conformation of allosteric LDHs, and the regulation is independent of the fructose 1,6-bisphosphate-binding site. Its function is as follows. Catalyzes the conversion of lactate to pyruvate. In Lactiplantibacillus pentosus (Lactobacillus pentosus), this protein is L-lactate dehydrogenase.